Reading from the N-terminus, the 179-residue chain is Translation initiation factor IF-3 (179 aa).

This sequence belongs to the IF-3 family. Monomer.

Its subcellular location is the cytoplasm. Functionally, IF-3 binds to the 30S ribosomal subunit and shifts the equilibrium between 70S ribosomes and their 50S and 30S subunits in favor of the free subunits, thus enhancing the availability of 30S subunits on which protein synthesis initiation begins. In Proteus hauseri, this protein is Translation initiation factor IF-3.